Reading from the N-terminus, the 177-residue chain is Large ribosomal subunit protein uL6 (177 aa).

It belongs to the universal ribosomal protein uL6 family. As to quaternary structure, part of the 50S ribosomal subunit.

Its function is as follows. This protein binds to the 23S rRNA, and is important in its secondary structure. It is located near the subunit interface in the base of the L7/L12 stalk, and near the tRNA binding site of the peptidyltransferase center. This chain is Large ribosomal subunit protein uL6, found in Haemophilus ducreyi (strain 35000HP / ATCC 700724).